The primary structure comprises 178 residues: MQSADNLIWIDLEMTGLDVDSCKIIEIAAIITDKDLNIIAEAEPIAIYQPDEVLANMNEWCIKTHTETGLTQRVKDSKISTEAAEQQILEFIRKFVPYQSSPLCGNSIWQDRRFLAKYMPNIDEYCHYRMLDVTTLKLLNQYWGDGKSFEKKNTHKALDDIRESIAELKFYRQKLLSI.

One can recognise an Exonuclease domain in the interval 7-168 (LIWIDLEMTG…DDIRESIAEL (162 aa)). The active site involves tyrosine 128.

Belongs to the oligoribonuclease family.

The protein resides in the cytoplasm. Functionally, 3'-to-5' exoribonuclease specific for small oligoribonucleotides. The polypeptide is Oligoribonuclease (Francisella tularensis subsp. holarctica (strain FTNF002-00 / FTA)).